A 118-amino-acid polypeptide reads, in one-letter code: Phosphoribosyl-AMP cyclohydrolase (118 aa).

A Mg(2+)-binding site is contributed by D85. C86 serves as a coordination point for Zn(2+). Mg(2+) contacts are provided by D87 and D89. Zn(2+) contacts are provided by C102 and C109.

This sequence belongs to the PRA-CH family. Homodimer. Requires Mg(2+) as cofactor. Zn(2+) serves as cofactor.

The protein localises to the cytoplasm. It catalyses the reaction 1-(5-phospho-beta-D-ribosyl)-5'-AMP + H2O = 1-(5-phospho-beta-D-ribosyl)-5-[(5-phospho-beta-D-ribosylamino)methylideneamino]imidazole-4-carboxamide. The protein operates within amino-acid biosynthesis; L-histidine biosynthesis; L-histidine from 5-phospho-alpha-D-ribose 1-diphosphate: step 3/9. Functionally, catalyzes the hydrolysis of the adenine ring of phosphoribosyl-AMP. The protein is Phosphoribosyl-AMP cyclohydrolase of Sulfurisphaera tokodaii (strain DSM 16993 / JCM 10545 / NBRC 100140 / 7) (Sulfolobus tokodaii).